Here is a 210-residue protein sequence, read N- to C-terminus: Probable transcriptional regulator ycf29 (210 aa).

The Response regulatory domain maps to 3 to 119; the sequence is NILILDTDIG…ELVVIIEGVL (117 aa). D52 is modified (4-aspartylphosphate). One can recognise an HTH luxR-type domain in the interval 142 to 207; that stretch reads SNNLKINFTP…ELVKYALENN (66 aa).

The protein resides in the plastid. It is found in the cyanelle. The protein is Probable transcriptional regulator ycf29 (ycf29) of Cyanophora paradoxa.